We begin with the raw amino-acid sequence, 406 residues long: 4-hydroxy-3-methylbut-2-en-1-yl diphosphate synthase (ferredoxin) (406 aa).

Residues C315, C318, C349, and E356 each coordinate [4Fe-4S] cluster.

The protein belongs to the IspG family. [4Fe-4S] cluster is required as a cofactor.

It catalyses the reaction (2E)-4-hydroxy-3-methylbut-2-enyl diphosphate + 2 oxidized [2Fe-2S]-[ferredoxin] + H2O = 2-C-methyl-D-erythritol 2,4-cyclic diphosphate + 2 reduced [2Fe-2S]-[ferredoxin] + H(+). Its pathway is isoprenoid biosynthesis; isopentenyl diphosphate biosynthesis via DXP pathway; isopentenyl diphosphate from 1-deoxy-D-xylulose 5-phosphate: step 5/6. Its function is as follows. Converts 2C-methyl-D-erythritol 2,4-cyclodiphosphate (ME-2,4cPP) into 1-hydroxy-2-methyl-2-(E)-butenyl 4-diphosphate. This is 4-hydroxy-3-methylbut-2-en-1-yl diphosphate synthase (ferredoxin) from Rippkaea orientalis (strain PCC 8801 / RF-1) (Cyanothece sp. (strain PCC 8801)).